Reading from the N-terminus, the 381-residue chain is L-lactate dehydrogenase (381 aa).

Positions 1–380 constitute an FMN hydroxy acid dehydrogenase domain; that stretch reads MIISASTDYR…TRDSLVRELG (380 aa). Substrate is bound at residue Tyr24. Positions 106 and 127 each coordinate FMN. Tyr129 provides a ligand contact to substrate. Thr155 serves as a coordination point for FMN. Residue Arg164 participates in substrate binding. An FMN-binding site is contributed by Lys251. Catalysis depends on His275, which acts as the Proton acceptor. A substrate-binding site is contributed by Arg278. 306 to 330 provides a ligand contact to FMN; it reads DSGIRSGLDVVRMIALGADTVLIGR.

It belongs to the FMN-dependent alpha-hydroxy acid dehydrogenase family. Homotetramer. It depends on FMN as a cofactor.

Its subcellular location is the cell inner membrane. It catalyses the reaction (S)-lactate + A = pyruvate + AH2. Catalyzes the conversion of L-lactate to pyruvate. Is coupled to the respiratory chain. The sequence is that of L-lactate dehydrogenase from Pseudomonas putida (strain GB-1).